A 119-amino-acid polypeptide reads, in one-letter code: NAD(P)H-quinone oxidoreductase subunit M (119 aa).

This sequence belongs to the complex I NdhM subunit family. In terms of assembly, NDH-1 can be composed of about 15 different subunits; different subcomplexes with different compositions have been identified which probably have different functions.

Its subcellular location is the cellular thylakoid membrane. The catalysed reaction is a plastoquinone + NADH + (n+1) H(+)(in) = a plastoquinol + NAD(+) + n H(+)(out). It carries out the reaction a plastoquinone + NADPH + (n+1) H(+)(in) = a plastoquinol + NADP(+) + n H(+)(out). Its function is as follows. NDH-1 shuttles electrons from an unknown electron donor, via FMN and iron-sulfur (Fe-S) centers, to quinones in the respiratory and/or the photosynthetic chain. The immediate electron acceptor for the enzyme in this species is believed to be plastoquinone. Couples the redox reaction to proton translocation, and thus conserves the redox energy in a proton gradient. Cyanobacterial NDH-1 also plays a role in inorganic carbon-concentration. The sequence is that of NAD(P)H-quinone oxidoreductase subunit M from Gloeothece citriformis (strain PCC 7424) (Cyanothece sp. (strain PCC 7424)).